The following is a 291-amino-acid chain: Ribosomal RNA small subunit methyltransferase I (291 aa).

Belongs to the methyltransferase superfamily. RsmI family.

The protein resides in the cytoplasm. It carries out the reaction cytidine(1402) in 16S rRNA + S-adenosyl-L-methionine = 2'-O-methylcytidine(1402) in 16S rRNA + S-adenosyl-L-homocysteine + H(+). Catalyzes the 2'-O-methylation of the ribose of cytidine 1402 (C1402) in 16S rRNA. This chain is Ribosomal RNA small subunit methyltransferase I, found in Neisseria meningitidis serogroup A / serotype 4A (strain DSM 15465 / Z2491).